Here is a 99-residue protein sequence, read N- to C-terminus: Malonate decarboxylase acyl carrier protein (99 aa).

Position 25 is an O-(phosphoribosyl dephospho-coenzyme A)serine (Ser25).

The protein belongs to the MdcC family. Covalently binds the prosthetic group of malonate decarboxylase.

It is found in the cytoplasm. In terms of biological role, subunit of malonate decarboxylase, it is an acyl carrier protein to which acetyl and malonyl thioester residues are bound via a 2'-(5''-phosphoribosyl)-3'-dephospho-CoA prosthetic group and turn over during the catalytic mechanism. The polypeptide is Malonate decarboxylase acyl carrier protein (Pseudomonas putida (Arthrobacter siderocapsulatus)).